Here is a 344-residue protein sequence, read N- to C-terminus: Phosphoribosylformylglycinamidine cyclo-ligase (344 aa).

It belongs to the AIR synthase family.

It localises to the cytoplasm. It carries out the reaction 2-formamido-N(1)-(5-O-phospho-beta-D-ribosyl)acetamidine + ATP = 5-amino-1-(5-phospho-beta-D-ribosyl)imidazole + ADP + phosphate + H(+). It functions in the pathway purine metabolism; IMP biosynthesis via de novo pathway; 5-amino-1-(5-phospho-D-ribosyl)imidazole from N(2)-formyl-N(1)-(5-phospho-D-ribosyl)glycinamide: step 2/2. The chain is Phosphoribosylformylglycinamidine cyclo-ligase from Exiguobacterium sp. (strain ATCC BAA-1283 / AT1b).